The primary structure comprises 172 residues: Putative phosphoesterase Bcer98_0945 (172 aa).

His34 acts as the Proton donor in catalysis. Short sequence motifs (HXTX) lie at residues His34 to Leu37 and His115 to Ile118. His115 functions as the Proton acceptor in the catalytic mechanism.

It belongs to the 2H phosphoesterase superfamily. YjcG family.

The sequence is that of Putative phosphoesterase Bcer98_0945 from Bacillus cytotoxicus (strain DSM 22905 / CIP 110041 / 391-98 / NVH 391-98).